A 64-amino-acid polypeptide reads, in one-letter code: Conotoxin Ca5.3 (64 aa).

The N-terminal stretch at 1–22 is a signal peptide; that stretch reads MRCVPVFIILLLLIASAPGVDA. The propeptide occupies 23–48; that stretch reads QPKTKYNAPLTSLHDNAKGILQEHWN. Isoleucine 61 is modified (isoleucine amide).

This sequence belongs to the conotoxin T superfamily. In terms of processing, contains 2 disulfide bonds that can be either 'C1-C3, C2-C4' or 'C1-C4, C2-C3', since these disulfide connectivities have been observed for conotoxins with cysteine framework V (for examples, see AC P0DQQ7 and AC P81755). In terms of tissue distribution, expressed by the venom duct.

It is found in the secreted. The polypeptide is Conotoxin Ca5.3 (Conus caracteristicus (Characteristic cone)).